The sequence spans 199 residues: Elongation factor Ts (199 aa).

Residues 81-84 (TDFV) form an involved in Mg(2+) ion dislocation from EF-Tu region.

It belongs to the EF-Ts family.

The protein resides in the cytoplasm. Its function is as follows. Associates with the EF-Tu.GDP complex and induces the exchange of GDP to GTP. It remains bound to the aminoacyl-tRNA.EF-Tu.GTP complex up to the GTP hydrolysis stage on the ribosome. This chain is Elongation factor Ts, found in Thermotoga petrophila (strain ATCC BAA-488 / DSM 13995 / JCM 10881 / RKU-1).